Consider the following 188-residue polypeptide: Adenine phosphoribosyltransferase (188 aa).

The protein belongs to the purine/pyrimidine phosphoribosyltransferase family. In terms of assembly, homodimer.

The protein localises to the cytoplasm. The catalysed reaction is AMP + diphosphate = 5-phospho-alpha-D-ribose 1-diphosphate + adenine. The protein operates within purine metabolism; AMP biosynthesis via salvage pathway; AMP from adenine: step 1/1. In terms of biological role, catalyzes a salvage reaction resulting in the formation of AMP, that is energically less costly than de novo synthesis. The chain is Adenine phosphoribosyltransferase from Burkholderia cenocepacia (strain HI2424).